The sequence spans 132 residues: Small ribosomal subunit protein uS8 (132 aa).

Belongs to the universal ribosomal protein uS8 family. In terms of assembly, part of the 30S ribosomal subunit. Contacts proteins S5 and S12.

In terms of biological role, one of the primary rRNA binding proteins, it binds directly to 16S rRNA central domain where it helps coordinate assembly of the platform of the 30S subunit. This chain is Small ribosomal subunit protein uS8, found in Cereibacter sphaeroides (strain ATCC 17025 / ATH 2.4.3) (Rhodobacter sphaeroides).